The following is a 339-amino-acid chain: Transmembrane protein 120B (339 aa).

Residues 1–77 adopt a coiled-coil conformation; that stretch reads MSGQLERCER…ASREEAELVQ (77 aa). The next 6 membrane-spanning stretches (helical) occupy residues 102 to 124, 132 to 152, 159 to 179, 187 to 207, 270 to 290, and 302 to 322; these read GLYL…AKFA, FKLY…FFLH, VFNF…SILI, GWWV…LTWP, FLLP…VTLF, and QVFV…LTTL.

Belongs to the TMEM120 family. In terms of assembly, heterooligomer with TMEM120A.

It localises to the nucleus inner membrane. In terms of biological role, necessary for efficient adipogenesis. Does not show ion channel activity. In Bos taurus (Bovine), this protein is Transmembrane protein 120B (TMEM120B).